The primary structure comprises 298 residues: tRNA pseudouridine synthase-like 1 (298 aa).

Catalysis depends on Asp-60, which acts as the Nucleophile. Tyr-124 is a substrate binding site.

Belongs to the tRNA pseudouridine synthase TruA family.

It catalyses the reaction a uridine in tRNA = a pseudouridine in tRNA. The chain is tRNA pseudouridine synthase-like 1 (pusl1) from Xenopus laevis (African clawed frog).